A 364-amino-acid chain; its full sequence is Natterin-3 (364 aa).

A signal peptide spans 1–18 (MKLSVLVVTLLAVSWTSA). The propeptide occupies 19–42 (QPETFSIQTKEANMNPEPANIRVA).

This sequence belongs to the natterin family. In terms of processing, contains 4 disulfide bonds. In terms of tissue distribution, expressed by the venom gland.

It is found in the secreted. With respect to regulation, inhibited by tissue-kallikrein inhibitor TKI and trasylol. Plasma kallikrein inhibitor PKSI527 and classical inhibitors of serine-, metallo-, thiol- or aspartate-peptidases evokes a minor inhibition of the peptide digestion. Functionally, shows nociceptive, edema-inducing and kininogenase activity with release of kallidin from low molecular weight kininogen. The cleavage occurs at Met-Lys bonds. This is Natterin-3 from Thalassophryne nattereri (Copper Joe toadfish).